A 142-amino-acid chain; its full sequence is MLKHKILGLDVGSKTVGIAISDLMGWTAQGLDTLRINEEQDDLGIDQLVKIIKDNQVGTVVIGLPKNMNNSIGFRGEASIKYKEKLQESIPSIDIVMWDERLSTMAAERSLLEADVSRQKRKKVIDKMAAVFILQGYLDSIQ.

The protein belongs to the YqgF nuclease family.

The protein localises to the cytoplasm. Functionally, could be a nuclease involved in processing of the 5'-end of pre-16S rRNA. This is Putative pre-16S rRNA nuclease from Staphylococcus epidermidis (strain ATCC 35984 / DSM 28319 / BCRC 17069 / CCUG 31568 / BM 3577 / RP62A).